A 247-amino-acid polypeptide reads, in one-letter code: Probable phosphatase Shew_1420 (247 aa).

His8, His10, His16, His41, Glu74, His102, His132, Asp193, and His195 together coordinate Zn(2+).

Belongs to the PHP family. The cofactor is Zn(2+).

This Shewanella loihica (strain ATCC BAA-1088 / PV-4) protein is Probable phosphatase Shew_1420.